Consider the following 891-residue polypeptide: Echinoderm microtubule-associated protein-like elp-1 (891 aa).

The span at 77–88 (DQSRSPTCSGYS) shows a compositional bias: polar residues. The segment at 77–167 (DQSRSPTCSG…ARGSPMRKWV (91 aa)) is disordered. Over residues 104–117 (SPSHAPPRSSHANS) the composition is skewed to low complexity. Residues 118 to 131 (KSLYINGMNNNSEE) show a composition bias toward polar residues. WD repeat units follow at residues 330–401 (GHTC…TLMV), 404–447 (GFEK…REGE), 499–537 (DKPK…TTKQ), 541–579 (VHPG…RTRR), 626–664 (GDPG…VEFS), 708–747 (EGTA…NLLV), 753–792 (HIPA…CDGT), 816–853 (SSNG…VTAG), and 859–890 (GHGR…EWCL).

It belongs to the WD repeat EMAP family.

It is found in the cytoplasm. The protein localises to the cytoskeleton. Functionally, may modify the assembly dynamics of microtubules, such that microtubules are slightly longer, but more dynamic. The protein is Echinoderm microtubule-associated protein-like elp-1 (elp-1) of Caenorhabditis elegans.